The primary structure comprises 389 residues: UDP-GlcNAc:betaGal beta-1,3-N-acetylglucosaminyltransferase 8 (389 aa).

At 1 to 7 (MRCRKCQ) the chain is on the cytoplasmic side. Residues 8–24 (LCLSALLTLLGLKVYIE) form a helical; Signal-anchor for type II membrane protein membrane-spanning segment. Residues 25-389 (WTSESWLKKA…RHLWVPELQC (365 aa)) lie on the Lumenal side of the membrane. A disordered region spans residues 36 to 57 (PRGALPSPTPPNAEPTLPTNLS). Residues Asn-55 and Asn-212 are each glycosylated (N-linked (GlcNAc...) asparagine).

This sequence belongs to the glycosyltransferase 31 family. Interacts with B3GNT2; this interaction greatly increases B3GNT2 catalytic activity, independently of B3GNT8 enzymatic activity.

The protein resides in the golgi apparatus membrane. It participates in protein modification; protein glycosylation. Functionally, beta-1,3-N-acetylglucosaminyltransferase that plays a role in the elongation of specific branch structures of multiantennary N-glycans. Has strong activity towards tetraantennary N-glycans and 2,6 triantennary glycans. The polypeptide is UDP-GlcNAc:betaGal beta-1,3-N-acetylglucosaminyltransferase 8 (Mus musculus (Mouse)).